The following is a 120-amino-acid chain: Seripauperin-2 (120 aa).

Residues 7–24 (IAAGVAAIAATASATTTL) traverse the membrane as a helical segment.

The protein belongs to the SRP1/TIP1 family. Seripauperin subfamily.

It is found in the membrane. The chain is Seripauperin-2 (PAU2) from Saccharomyces cerevisiae (strain ATCC 204508 / S288c) (Baker's yeast).